The primary structure comprises 287 residues: MTFSQMILNLQNYWQEQGCVIMQPYDMPAGAGTFHPATFLRSLGKKPWAVAYVAPSRRPTDGRYGENPNRLGAYYQFQVLIKPSPDNIQELYLKSLENLGFDLKSHDIRFVEDNWESPSLGAWGLGWEVWLDGMEVTQFTYFQQVGGIAVDLVSAEITYGLERIAMYLQNVDNVYDIVWSEFNGEKIKYADVHKQSEYEFSKYNFEVSDVKILNEQFENSYKECKNILEQGLALPAYDYCMLAAHTFNLLDARGAISVAQRQDYMLKIRELSKNCAEIYKKNLNETE.

This sequence belongs to the class-II aminoacyl-tRNA synthetase family. In terms of assembly, tetramer of two alpha and two beta subunits.

It localises to the cytoplasm. The catalysed reaction is tRNA(Gly) + glycine + ATP = glycyl-tRNA(Gly) + AMP + diphosphate. This chain is Glycine--tRNA ligase alpha subunit, found in Campylobacter jejuni subsp. doylei (strain ATCC BAA-1458 / RM4099 / 269.97).